The following is a 487-amino-acid chain: Probable peptidoglycan glycosyltransferase FtsW (487 aa).

Transmembrane regions (helical) follow at residues 30 to 50 (VSLI…VTSA), 71 to 91 (IYIV…MQWW), 93 to 113 (TSNA…LLVG), 122 to 142 (WLAI…FFFC), 167 to 187 (VVFF…TVVV), 203 to 223 (LWQF…LIMF), 282 to 302 (FIMA…VLAL), 332 to 352 (IGIW…GILP), and 358 to 378 (FPLL…VGLL). Disordered stretches follow at residues 398-419 (KAKA…SAGK) and 444-487 (IDSI…DGYV). Residues 401–416 (ASTSSSRKNKPKTASS) show a composition bias toward polar residues. Residues 444–453 (IDSIMDDFAQ) are compositionally biased toward acidic residues.

The protein belongs to the SEDS family. FtsW subfamily.

It localises to the cell inner membrane. The catalysed reaction is [GlcNAc-(1-&gt;4)-Mur2Ac(oyl-L-Ala-gamma-D-Glu-L-Lys-D-Ala-D-Ala)](n)-di-trans,octa-cis-undecaprenyl diphosphate + beta-D-GlcNAc-(1-&gt;4)-Mur2Ac(oyl-L-Ala-gamma-D-Glu-L-Lys-D-Ala-D-Ala)-di-trans,octa-cis-undecaprenyl diphosphate = [GlcNAc-(1-&gt;4)-Mur2Ac(oyl-L-Ala-gamma-D-Glu-L-Lys-D-Ala-D-Ala)](n+1)-di-trans,octa-cis-undecaprenyl diphosphate + di-trans,octa-cis-undecaprenyl diphosphate + H(+). Its pathway is cell wall biogenesis; peptidoglycan biosynthesis. Its function is as follows. Peptidoglycan polymerase that is essential for cell division. The polypeptide is Probable peptidoglycan glycosyltransferase FtsW (Pseudoalteromonas atlantica (strain T6c / ATCC BAA-1087)).